We begin with the raw amino-acid sequence, 430 residues long: MKQALRVAFGFLILWASVLHAEVRIVIDSGVDSGRPIGVVPFQWAGPGAAPEDIGGIVAADLRNSGKFNPLDRARLPQQPGSAQEVQPAAWSALGIDAVVVGQVTPNPDGSYNVAYQLVDTGGAPGTVLAQNSYKVNKQWLRYAGHTASDEVFEKLTGIKGAFRTRIAYVVQTNGGQFPYELRVSDYDGYNQFVVHRSPQPLMSPAWSPDGSKLAYVTFESGRSALVIQTLANGAVRQVASFPRHNGAPAFSPDGSKLAFALSKTGSLNLYVMDLASGQIRQVTDGRSNNTEPTWFPDSQNLAFTSDLAGRPQVYKVNINGGAPQRITWEGSQNQDADVSSDGKFMVMVSSNGGQQHIAKQDLATGGVQVLSSTFLDETPSLAPNGTMVIYSSSQGMGSVLNLVSTDGRFKARLPATDGQVKFPAWSPYL.

The first 21 residues, 1–21, serve as a signal peptide directing secretion; the sequence is MKQALRVAFGFLILWASVLHA.

It belongs to the TolB family. In terms of assembly, the Tol-Pal system is composed of five core proteins: the inner membrane proteins TolA, TolQ and TolR, the periplasmic protein TolB and the outer membrane protein Pal. They form a network linking the inner and outer membranes and the peptidoglycan layer.

It is found in the periplasm. Part of the Tol-Pal system, which plays a role in outer membrane invagination during cell division and is important for maintaining outer membrane integrity. TolB occupies a key intermediary position in the Tol-Pal system because it communicates directly with both membrane-embedded components, Pal in the outer membrane and TolA in the inner membrane. The chain is Tol-Pal system protein TolB from Shigella flexneri serotype 5b (strain 8401).